Reading from the N-terminus, the 220-residue chain is UPF0758 protein APL_1970 (220 aa).

The MPN domain occupies 98–220 (NINEPYLAVM…YFSFEEEKFR (123 aa)). 3 residues coordinate Zn(2+): His-169, His-171, and Asp-182. The short motif at 169-182 (HNHPSGNCTPSESD) is the JAMM motif element.

It belongs to the UPF0758 family.

This Actinobacillus pleuropneumoniae serotype 5b (strain L20) protein is UPF0758 protein APL_1970.